Here is a 502-residue protein sequence, read N- to C-terminus: Probable cytosol aminopeptidase (502 aa).

Mn(2+) is bound by residues lysine 269 and aspartate 274. Residue lysine 281 is part of the active site. The Mn(2+) site is built by aspartate 292, aspartate 351, and glutamate 353. Arginine 355 is an active-site residue.

It belongs to the peptidase M17 family. The cofactor is Mn(2+).

Its subcellular location is the cytoplasm. It catalyses the reaction Release of an N-terminal amino acid, Xaa-|-Yaa-, in which Xaa is preferably Leu, but may be other amino acids including Pro although not Arg or Lys, and Yaa may be Pro. Amino acid amides and methyl esters are also readily hydrolyzed, but rates on arylamides are exceedingly low.. It carries out the reaction Release of an N-terminal amino acid, preferentially leucine, but not glutamic or aspartic acids.. Functionally, presumably involved in the processing and regular turnover of intracellular proteins. Catalyzes the removal of unsubstituted N-terminal amino acids from various peptides. In Shewanella piezotolerans (strain WP3 / JCM 13877), this protein is Probable cytosol aminopeptidase.